We begin with the raw amino-acid sequence, 161 residues long: Allophycocyanin alpha chain (161 aa).

Asn-71 is subject to N4-methylasparagine. Residue Cys-81 participates in (2R,3E)-phycocyanobilin binding.

Belongs to the phycobiliprotein family. Heterodimer of an alpha and a beta chain. In terms of processing, contains one covalently linked phycocyanobilin chromophore.

It is found in the cellular thylakoid membrane. Functionally, light-harvesting photosynthetic bile pigment-protein from the phycobiliprotein complex. Allophycocyanin has a maximum absorption at approximately 650 nanometers. In Synechocystis sp. (strain ATCC 27184 / PCC 6803 / Kazusa), this protein is Allophycocyanin alpha chain (apcA).